Consider the following 347-residue polypeptide: Dihydroorotase (347 aa).

2 residues coordinate Zn(2+): histidine 17 and histidine 19. Residues histidine 19 to arginine 21 and asparagine 45 contribute to the substrate site. Lysine 103, histidine 140, and histidine 178 together coordinate Zn(2+). Lysine 103 is modified (N6-carboxylysine). Histidine 140 serves as a coordination point for substrate. Leucine 223 serves as a coordination point for substrate. Aspartate 251 is a binding site for Zn(2+). The active site involves aspartate 251. The substrate site is built by histidine 255 and alanine 267.

This sequence belongs to the metallo-dependent hydrolases superfamily. DHOase family. Class II DHOase subfamily. In terms of assembly, homodimer. Zn(2+) is required as a cofactor.

The enzyme catalyses (S)-dihydroorotate + H2O = N-carbamoyl-L-aspartate + H(+). It functions in the pathway pyrimidine metabolism; UMP biosynthesis via de novo pathway; (S)-dihydroorotate from bicarbonate: step 3/3. Catalyzes the reversible cyclization of carbamoyl aspartate to dihydroorotate. This is Dihydroorotase from Pectobacterium carotovorum subsp. carotovorum (strain PC1).